We begin with the raw amino-acid sequence, 121 residues long: Large ribosomal subunit protein bL19 (121 aa).

The protein belongs to the bacterial ribosomal protein bL19 family.

This protein is located at the 30S-50S ribosomal subunit interface and may play a role in the structure and function of the aminoacyl-tRNA binding site. This Chlorobium phaeovibrioides (strain DSM 265 / 1930) (Prosthecochloris vibrioformis (strain DSM 265)) protein is Large ribosomal subunit protein bL19.